Here is a 139-residue protein sequence, read N- to C-terminus: Actin-depolymerizing factor 1 (139 aa).

In terms of domain architecture, ADF-H spans Ala5–Asn139.

This sequence belongs to the actin-binding proteins ADF family.

Functionally, actin-depolymerizing protein. Severs actin filaments (F-actin) and binds to actin monomers. The chain is Actin-depolymerizing factor 1 (ADF1) from Petunia hybrida (Petunia).